The sequence spans 216 residues: tRNA (guanine-N(7)-)-methyltransferase (216 aa).

S-adenosyl-L-methionine is bound by residues Glu-43, Asp-68, Asn-95, and Asn-117. Substrate-binding positions include Asp-153 and 190–193 (TEYE).

The protein belongs to the class I-like SAM-binding methyltransferase superfamily. TrmB family.

It catalyses the reaction guanosine(46) in tRNA + S-adenosyl-L-methionine = N(7)-methylguanosine(46) in tRNA + S-adenosyl-L-homocysteine. The protein operates within tRNA modification; N(7)-methylguanine-tRNA biosynthesis. Catalyzes the formation of N(7)-methylguanine at position 46 (m7G46) in tRNA. This chain is tRNA (guanine-N(7)-)-methyltransferase, found in Desulfitobacterium hafniense (strain Y51).